Reading from the N-terminus, the 88-residue chain is Small ribosomal subunit protein uS19 (88 aa).

The protein belongs to the universal ribosomal protein uS19 family.

Functionally, protein S19 forms a complex with S13 that binds strongly to the 16S ribosomal RNA. This chain is Small ribosomal subunit protein uS19, found in Ureaplasma parvum serovar 3 (strain ATCC 27815 / 27 / NCTC 11736).